We begin with the raw amino-acid sequence, 182 residues long: Peptidyl-tRNA hydrolase (182 aa).

Position 14 (Y14) interacts with tRNA. H19 serves as the catalytic Proton acceptor. TRNA-binding residues include F60, N62, and N106.

Belongs to the PTH family. As to quaternary structure, monomer.

The protein localises to the cytoplasm. The enzyme catalyses an N-acyl-L-alpha-aminoacyl-tRNA + H2O = an N-acyl-L-amino acid + a tRNA + H(+). Functionally, hydrolyzes ribosome-free peptidyl-tRNAs (with 1 or more amino acids incorporated), which drop off the ribosome during protein synthesis, or as a result of ribosome stalling. In terms of biological role, catalyzes the release of premature peptidyl moieties from peptidyl-tRNA molecules trapped in stalled 50S ribosomal subunits, and thus maintains levels of free tRNAs and 50S ribosomes. The chain is Peptidyl-tRNA hydrolase from Campylobacter concisus (strain 13826).